A 394-amino-acid chain; its full sequence is Lipoyl synthase, chloroplastic (394 aa).

A chloroplast-targeting transit peptide spans 1–36; sequence MMHHCSITKPTFSISISTQKLHHHSSKFLNLGFRIR. Residues C127, C132, C138, C158, C162, C165, and S373 each contribute to the [4Fe-4S] cluster site. Residues 141-362 form the Radical SAM core domain; sequence GGGDGVATAT…KTYGESIGFR (222 aa).

This sequence belongs to the radical SAM superfamily. Lipoyl synthase family. Requires [4Fe-4S] cluster as cofactor. In terms of tissue distribution, expressed in roots, leaves and flowers.

The protein resides in the plastid. It localises to the chloroplast. It carries out the reaction [[Fe-S] cluster scaffold protein carrying a second [4Fe-4S](2+) cluster] + N(6)-octanoyl-L-lysyl-[protein] + 2 oxidized [2Fe-2S]-[ferredoxin] + 2 S-adenosyl-L-methionine + 4 H(+) = [[Fe-S] cluster scaffold protein] + N(6)-[(R)-dihydrolipoyl]-L-lysyl-[protein] + 4 Fe(3+) + 2 hydrogen sulfide + 2 5'-deoxyadenosine + 2 L-methionine + 2 reduced [2Fe-2S]-[ferredoxin]. It functions in the pathway protein modification; protein lipoylation via endogenous pathway; protein N(6)-(lipoyl)lysine from octanoyl-[acyl-carrier-protein]: step 2/2. Its function is as follows. Catalyzes the radical-mediated insertion of two sulfur atoms into the C-6 and C-8 positions of the octanoyl moiety bound to the lipoyl domains of lipoate-dependent enzymes, thereby converting the octanoylated domains into lipoylated derivatives. Together with LIP2P and LIP2P2 is essential for de novo plastidial protein lipoylation during seed development. This chain is Lipoyl synthase, chloroplastic, found in Arabidopsis thaliana (Mouse-ear cress).